A 528-amino-acid polypeptide reads, in one-letter code: MLVLVSLVLCLTGFCLLQWALKERKIVKGLPPGPRPKPIIGNLLDLPPPGALDWLHWLKHKELYGPISSVTIFGQTIIIINGHRVANELMEKRSGVHSSRPHVPIAELAGWQYTLGFIPYDSRLRAYRRALHQEMGNATSISKYHNILDMETHRLLFRILKTPDCLMQHLRKEAGSIILRITYGYITEPEAYDPLIDLVDKAMEDFAQVILPGGWLVNFIPMLKYLPSWFPGCDWQRRAKAFKQRAKAMTDIPYAFVKQQHEQQKHIPSYVSRLLEQNNIKLGSEEELVVKWSAQSIYGGGAETSVSVFACFFQVMALHLNVQKKAQEEIDRVVGASRLPDLSDCKNLPYINAVVKEVLRWHPVAPMGVAHASSKEDIYHRYVIPKGAILVPNIWAMAHDPDFYHNAMDFEPERFLKSGRNEQNPEYDPHQFIFGFGRRTCPGQHLVSANLSLGVARVLAVFNITNAVRDGKKVPISPEFSPGVISRPAPFELSIQVRNAECKRLIEAVGMKFPWEESHAEALAQLRI.

Residues 2-21 (LVLVSLVLCLTGFCLLQWAL) traverse the membrane as a helical segment. N137 carries an N-linked (GlcNAc...) asparagine glycan. C441 is a heme binding site. 2 N-linked (GlcNAc...) asparagine glycosylation sites follow: N450 and N463.

It belongs to the cytochrome P450 family. Heme serves as cofactor.

It localises to the membrane. Functionally, cytochrome P450 monooxygenase; part of the gene cluster that mediates the biosynthesis of 2,4'-dihydroxy-3'-methoxypropiophenone. The first step of the pathway is the conversion of acetate into acetyl-CoA by the acyl-CoA ligase ppsA. Acetyl-CoA is then used as a starter unit by the polyketide synthase ppsB and condensed with 4 malonyl-CoA unit to produce the pentaketide backbone. During polyketide extension, the polykedite chain is probably reduced and dehydrated by the KR and PT domains, respectively. O-methylation seems to be catalyzed by an unknown methyltransferase rather than by the CMeT domain of ppsB. Two hydroxylations and one further decarboxylation step catalyzed by yet unknown enzymes are then required to yield 4'-hydroxy-3'-methoxypropiophenone. PpsC functions as a carrier protein to transport 4'-hydroxy-3'-methoxypropiophenone to a specific cell compartment in which 4'-hydroxy-3'-methoxypropiophenone is hydroxylated to 2,4'-dihydroxy-3'-methoxypropiophenone by a still to be identified enzyme. The sequence is that of Cytochrome P450 monooxygenase ppsD from Aspergillus oryzae (strain ATCC 42149 / RIB 40) (Yellow koji mold).